The sequence spans 311 residues: Cell division protein ZipA (311 aa).

Residues 1–5 (MQELR) are Periplasmic-facing. A helical membrane pass occupies residues 6 to 26 (FVLIVVGALAIMALLFHGLWT). Topologically, residues 27 to 311 (SKKEGKAKFG…QIVEFKAANA (285 aa)) are cytoplasmic. A compositionally biased stretch (basic and acidic residues) spans 32-54 (KAKFGDKPLSKLDLGESEPKESE). A disordered region spans residues 32–60 (KAKFGDKPLSKLDLGESEPKESEMYVAPE).

This sequence belongs to the ZipA family. In terms of assembly, interacts with FtsZ via their C-terminal domains.

It is found in the cell inner membrane. In terms of biological role, essential cell division protein that stabilizes the FtsZ protofilaments by cross-linking them and that serves as a cytoplasmic membrane anchor for the Z ring. Also required for the recruitment to the septal ring of downstream cell division proteins. This Vibrio vulnificus (strain CMCP6) protein is Cell division protein ZipA.